We begin with the raw amino-acid sequence, 464 residues long: ATP synthase subunit beta (464 aa).

152–159 (GGAGVGKT) lines the ATP pocket.

The protein belongs to the ATPase alpha/beta chains family. In terms of assembly, F-type ATPases have 2 components, CF(1) - the catalytic core - and CF(0) - the membrane proton channel. CF(1) has five subunits: alpha(3), beta(3), gamma(1), delta(1), epsilon(1). CF(0) has three main subunits: a(1), b(2) and c(9-12). The alpha and beta chains form an alternating ring which encloses part of the gamma chain. CF(1) is attached to CF(0) by a central stalk formed by the gamma and epsilon chains, while a peripheral stalk is formed by the delta and b chains.

The protein resides in the cell inner membrane. It catalyses the reaction ATP + H2O + 4 H(+)(in) = ADP + phosphate + 5 H(+)(out). Produces ATP from ADP in the presence of a proton gradient across the membrane. The catalytic sites are hosted primarily by the beta subunits. The sequence is that of ATP synthase subunit beta from Aliarcobacter butzleri (strain RM4018) (Arcobacter butzleri).